Here is a 1293-residue protein sequence, read N- to C-terminus: Period circadian protein homolog 1 (1293 aa).

The disordered stretch occupies residues 1-134 (MSGPLEGADG…SSEQSARART (134 aa)). The interval 1–151 (MSGPLEGADG…LRELKLRLPP (151 aa)) is interaction with BTRC. Composition is skewed to low complexity over residues 48–57 (NSNGSSGNES) and 64–115 (GASQ…ASSE). Residues 116–132 (QDNPSTSGCSSEQSARA) show a composition bias toward polar residues. Residue threonine 121 is modified to Phosphothreonine; by CSNK1E. 2 positions are modified to phosphoserine; by CSNK1E: serine 122 and serine 126. Positions 138–147 (LMTALRELKL) match the Nuclear export signal 1 motif. PAS domains lie at 208–275 (ITSE…PSRL) and 348–414 (YEAP…KILQ). The 44-residue stretch at 422 to 465 (HSPIRFCARNGEYVTMDTSWAGFVHPWSRKVAFVLGRHKVRTAP) folds into the PAC domain. The Nuclear export signal 2 motif lies at 489 to 498 (LSEQIHRLLL). Disordered stretches follow at residues 509 to 544 (LCGVGPLMSPGPLHSPGSSSDSNGGDAEGPGPPAPV) and 647 to 697 (TKRK…KEPV). Composition is skewed to low complexity over residues 513 to 533 (GPLMSPGPLHSPGSSSDSNGG) and 652 to 661 (ASSSCTASSA). The tract at residues 596–814 (ELEVAPAPDQ…GLDTSSVAPS (219 aa)) is required for phosphorylation by CSNK1E. 3 positions are modified to phosphoserine: serine 660, serine 662, and serine 703. Disordered stretches follow at residues 748 to 771 (GLAPGPAPSPAPSPTVAPDPAPDA), 808 to 870 (TSSV…PPAT), 935 to 1094 (SQAP…SKYF), and 1204 to 1293 (SVQD…NGTS). Pro residues predominate over residues 750–768 (APGPAPSPAPSPTVAPDPA). Serine 814 is modified (phosphoserine). Residues 823–839 (IPSGRRHHCRSKAKRSR) carry the Nuclear localization signal motif. Basic residues predominate over residues 826–843 (GRRHHCRSKAKRSRHHQT). 2 stretches are compositionally biased toward pro residues: residues 856-870 (SPVPSSGPWPPPPAT) and 952-962 (PSLPPPPPSPP). The span at 969–982 (LFNSRCSSPLQLNL) shows a compositional bias: polar residues. Phosphoserine occurs at positions 975 and 976. The Nuclear export signal 3 motif lies at 978–985 (LQLNLLQL). Positions 1032–1058 (LSGSSDLLELLLQEDSRSGTGSAASGS) are enriched in low complexity. The LXXLL signature appears at 1039–1043 (LELLL). Over residues 1059–1073 (LGSGLGSGSGSGSHE) the composition is skewed to gly residues. Residues 1074–1091 (GGSTSASITRSSQSSHTS) show a composition bias toward low complexity. A CRY binding domain region spans residues 1145–1293 (SRDAASVLKQ…ALPAEENGTS (149 aa)). Gly residues predominate over residues 1232 to 1250 (GEGGGVGGGGGGVGGGGGD). The segment covering 1255 to 1269 (AQTQIGTKGSSSQDS) has biased composition (polar residues).

In terms of assembly, homodimer. Component of the circadian core oscillator, which includes the CRY proteins, CLOCK or NPAS2, BMAL1 or BMAL2, CSNK1D and/or CSNK1E, TIMELESS, and the PER proteins. Interacts directly with TIMELESS, PER2, PER3, CRY1 and CRY2. Interacts with BMAL1 and CLOCK. Interacts with GPRASP1. Interacts (phosphorylated) with BTRC and FBXW11; the interactions trigger proteasomal degradation. Interacts with NONO and WDR5. Interacts with SFPQ. Interacts with USP2. Interacts with HNF4A. Phosphorylated on serine residues by CSNK1D, CSNK1E and probably also by CSNK1G2. Phosphorylation by CSNK1D or CSNK1E promotes nuclear location of PER proteins as well as ubiquitination and subsequent degradation. May be dephosphorylated by PP1. In terms of processing, ubiquitinated; requires phosphorylation by CSNK1E and interaction with BTRC and FBXW11. Deubiquitinated by USP2. Expressed in pancreas. In the CNS, highly expressed in the SCN, internal granular layer of granular cells of the olfactory bulb, tuberculum olfactorium, piriform cortex, gyrus dentatus of the hippocampus, cerebellum, pars tuberalis/median eminence, and pituitary, and moderately in the tenia tecta, caudate putamen, accumbens nucleus, spinal cord, superior and inferior colliculus and pineal gland.

It localises to the nucleus. The protein localises to the cytoplasm. In terms of biological role, transcriptional repressor which forms a core component of the circadian clock. The circadian clock, an internal time-keeping system, regulates various physiological processes through the generation of approximately 24 hour circadian rhythms in gene expression, which are translated into rhythms in metabolism and behavior. It is derived from the Latin roots 'circa' (about) and 'diem' (day) and acts as an important regulator of a wide array of physiological functions including metabolism, sleep, body temperature, blood pressure, endocrine, immune, cardiovascular, and renal function. Consists of two major components: the central clock, residing in the suprachiasmatic nucleus (SCN) of the brain, and the peripheral clocks that are present in nearly every tissue and organ system. Both the central and peripheral clocks can be reset by environmental cues, also known as Zeitgebers (German for 'timegivers'). The predominant Zeitgeber for the central clock is light, which is sensed by retina and signals directly to the SCN. The central clock entrains the peripheral clocks through neuronal and hormonal signals, body temperature and feeding-related cues, aligning all clocks with the external light/dark cycle. Circadian rhythms allow an organism to achieve temporal homeostasis with its environment at the molecular level by regulating gene expression to create a peak of protein expression once every 24 hours to control when a particular physiological process is most active with respect to the solar day. Transcription and translation of core clock components (CLOCK, NPAS2, BMAL1, BMAL2, PER1, PER2, PER3, CRY1 and CRY2) plays a critical role in rhythm generation, whereas delays imposed by post-translational modifications (PTMs) are important for determining the period (tau) of the rhythms (tau refers to the period of a rhythm and is the length, in time, of one complete cycle). A diurnal rhythm is synchronized with the day/night cycle, while the ultradian and infradian rhythms have a period shorter and longer than 24 hours, respectively. Disruptions in the circadian rhythms contribute to the pathology of cardiovascular diseases, cancer, metabolic syndromes and aging. A transcription/translation feedback loop (TTFL) forms the core of the molecular circadian clock mechanism. Transcription factors, CLOCK or NPAS2 and BMAL1 or BMAL2, form the positive limb of the feedback loop, act in the form of a heterodimer and activate the transcription of core clock genes and clock-controlled genes (involved in key metabolic processes), harboring E-box elements (5'-CACGTG-3') within their promoters. The core clock genes: PER1/2/3 and CRY1/2 which are transcriptional repressors form the negative limb of the feedback loop and interact with the CLOCK|NPAS2-BMAL1|BMAL2 heterodimer inhibiting its activity and thereby negatively regulating their own expression. This heterodimer also activates nuclear receptors NR1D1/2 and RORA/B/G, which form a second feedback loop and which activate and repress BMAL1 transcription, respectively. Regulates circadian target genes expression at post-transcriptional levels, but may not be required for the repression at transcriptional level. Controls PER2 protein decay. Represses CRY2 preventing its repression on CLOCK/BMAL1 target genes such as FXYD5 and SCNN1A in kidney and PPARA in liver. Besides its involvement in the maintenance of the circadian clock, has an important function in the regulation of several processes. Participates in the repression of glucocorticoid receptor NR3C1/GR-induced transcriptional activity by reducing the association of NR3C1/GR to glucocorticoid response elements (GREs) by BMAL1:CLOCK. Plays a role in the modulation of the neuroinflammatory state via the regulation of inflammatory mediators release, such as CCL2 and IL6. In spinal astrocytes, negatively regulates the MAPK14/p38 and MAPK8/JNK MAPK cascades as well as the subsequent activation of NFkappaB. Coordinately regulates the expression of multiple genes that are involved in the regulation of renal sodium reabsorption. Can act as gene expression activator in a gene and tissue specific manner, in kidney enhances WNK1 and SLC12A3 expression in collaboration with CLOCK. Modulates hair follicle cycling. Represses the CLOCK-BMAL1 induced transcription of BHLHE40/DEC1. This chain is Period circadian protein homolog 1, found in Rattus norvegicus (Rat).